A 130-amino-acid polypeptide reads, in one-letter code: Cytochrome c-type biogenesis protein CcmE (130 aa).

The Cytoplasmic portion of the chain corresponds to 1–7; it reads MKKKHKR. A helical; Signal-anchor for type II membrane protein membrane pass occupies residues 8-28; the sequence is LLITSGIFCFLSCAVFFILTT. The Extracellular portion of the chain corresponds to 29–130; it reads LKENISFFYT…DENYMPKVLK (102 aa). Residues histidine 120 and tyrosine 124 each coordinate heme.

Belongs to the CcmE/CycJ family.

It is found in the cell membrane. In terms of biological role, heme chaperone required for the biogenesis of c-type cytochromes. Transiently binds heme delivered by CcmC and transfers the heme to apo-cytochromes in a process facilitated by CcmF and CcmH. The chain is Cytochrome c-type biogenesis protein CcmE from Wolbachia pipientis wMel.